The following is a 247-amino-acid chain: Carboxy-S-adenosyl-L-methionine synthase (247 aa).

S-adenosyl-L-methionine-binding positions include Tyr-40, 65-67, 90-91, 122-123, Asn-137, and Arg-204; these read GAS, DN, and DI.

It belongs to the class I-like SAM-binding methyltransferase superfamily. Cx-SAM synthase family. In terms of assembly, homodimer.

The enzyme catalyses prephenate + S-adenosyl-L-methionine = carboxy-S-adenosyl-L-methionine + 3-phenylpyruvate + H2O. Functionally, catalyzes the conversion of S-adenosyl-L-methionine (SAM) to carboxy-S-adenosyl-L-methionine (Cx-SAM). The sequence is that of Carboxy-S-adenosyl-L-methionine synthase from Pseudomonas fluorescens (strain Pf0-1).